The following is a 363-amino-acid chain: UDP-N-acetylglucosamine--N-acetylmuramyl-(pentapeptide) pyrophosphoryl-undecaprenol N-acetylglucosamine transferase (363 aa).

Residues 13–15 (TGG), N125, R166, S195, I249, 268–273 (ALTVSE), and Q294 each bind UDP-N-acetyl-alpha-D-glucosamine.

The protein belongs to the glycosyltransferase 28 family. MurG subfamily.

It localises to the cell inner membrane. It catalyses the reaction di-trans,octa-cis-undecaprenyl diphospho-N-acetyl-alpha-D-muramoyl-L-alanyl-D-glutamyl-meso-2,6-diaminopimeloyl-D-alanyl-D-alanine + UDP-N-acetyl-alpha-D-glucosamine = di-trans,octa-cis-undecaprenyl diphospho-[N-acetyl-alpha-D-glucosaminyl-(1-&gt;4)]-N-acetyl-alpha-D-muramoyl-L-alanyl-D-glutamyl-meso-2,6-diaminopimeloyl-D-alanyl-D-alanine + UDP + H(+). Its pathway is cell wall biogenesis; peptidoglycan biosynthesis. In terms of biological role, cell wall formation. Catalyzes the transfer of a GlcNAc subunit on undecaprenyl-pyrophosphoryl-MurNAc-pentapeptide (lipid intermediate I) to form undecaprenyl-pyrophosphoryl-MurNAc-(pentapeptide)GlcNAc (lipid intermediate II). The sequence is that of UDP-N-acetylglucosamine--N-acetylmuramyl-(pentapeptide) pyrophosphoryl-undecaprenol N-acetylglucosamine transferase from Cellvibrio japonicus (strain Ueda107) (Pseudomonas fluorescens subsp. cellulosa).